The following is a 678-amino-acid chain: Protein hook (678 aa).

The tract at residues Met-1–Glu-155 is interaction with microtubules. One can recognise a Calponin-homology (CH) domain in the interval Asn-5 to Ala-123. 2 coiled-coil regions span residues Glu-135–Gly-435 and Gln-479–Val-589.

The protein belongs to the hook family. Homodimer. Interacts with microtubules via its N-terminus.

It localises to the cytoplasm. Its subcellular location is the cytoskeleton. The protein localises to the endosome. The protein resides in the synapse. Functionally, involved in endocytic trafficking by stabilizing organelles of the endocytic pathway. Probably acts as a cytoskeletal linker protein required to tether endosome vesicles to the cytoskeleton. Involved in modulation of endocytosis at stages required for down-regulation of membrane proteins that control synapse size. Not involved in synaptic vesicle recycling. Required in R7 cells for boss endocytosis into multivesicular bodies (MVBs). Has a role in regulating adult longevity. The sequence is that of Protein hook from Drosophila virilis (Fruit fly).